Reading from the N-terminus, the 523-residue chain is 2-isopropylmalate synthase (523 aa).

In terms of domain architecture, Pyruvate carboxyltransferase spans 5 to 267; it reads VIIFDTTLRD…HTNINHHEIW (263 aa). Mn(2+)-binding residues include Asp14, His202, His204, and Asn238. The segment at 392–523 is regulatory domain; that stretch reads RLDYFSVQSG…QNKENNKETV (132 aa).

Belongs to the alpha-IPM synthase/homocitrate synthase family. LeuA type 1 subfamily. As to quaternary structure, homodimer. Requires Mn(2+) as cofactor.

The protein resides in the cytoplasm. It catalyses the reaction 3-methyl-2-oxobutanoate + acetyl-CoA + H2O = (2S)-2-isopropylmalate + CoA + H(+). Its pathway is amino-acid biosynthesis; L-leucine biosynthesis; L-leucine from 3-methyl-2-oxobutanoate: step 1/4. In terms of biological role, catalyzes the condensation of the acetyl group of acetyl-CoA with 3-methyl-2-oxobutanoate (2-ketoisovalerate) to form 3-carboxy-3-hydroxy-4-methylpentanoate (2-isopropylmalate). This Salmonella dublin (strain CT_02021853) protein is 2-isopropylmalate synthase.